The chain runs to 170 residues: Arginine repressor (170 aa).

It belongs to the ArgR family.

It is found in the cytoplasm. It functions in the pathway amino-acid biosynthesis; L-arginine biosynthesis [regulation]. Its function is as follows. Regulates arginine biosynthesis genes. The protein is Arginine repressor of Bifidobacterium longum (strain DJO10A).